The chain runs to 931 residues: Protein translocase subunit SecA (931 aa).

ATP contacts are provided by residues Gln87, 105-109 (GEGKT), and Asp515. Cys915, Cys917, Cys926, and His927 together coordinate Zn(2+).

The protein belongs to the SecA family. As to quaternary structure, monomer and homodimer. Part of the essential Sec protein translocation apparatus which comprises SecA, SecYEG and auxiliary proteins SecDF-YajC and YidC. Requires Zn(2+) as cofactor.

It is found in the cell inner membrane. It localises to the cytoplasm. It carries out the reaction ATP + H2O + cellular proteinSide 1 = ADP + phosphate + cellular proteinSide 2.. Part of the Sec protein translocase complex. Interacts with the SecYEG preprotein conducting channel. Has a central role in coupling the hydrolysis of ATP to the transfer of proteins into and across the cell membrane, serving both as a receptor for the preprotein-SecB complex and as an ATP-driven molecular motor driving the stepwise translocation of polypeptide chains across the membrane. The polypeptide is Protein translocase subunit SecA (Burkholderia ambifaria (strain MC40-6)).